We begin with the raw amino-acid sequence, 559 residues long: MSTAVNVPSAVRPADKRPIASFHPSPWGDYFLKYVPCDQVTQAKMEDEVKKVEEDVKKELRKLAKAVGKPLELLNFIDVVERLGVGYRLEQEIEDLVQAIFDNDKFGVDEFDLYHTSLWFRLLRQHGFHVSCDVFGKFKGRNGRFKDSLASDVKGILGLYEASHVRTHGDDTLDEALVFTTTHLKAVVTNQPNHPLVPQVTHALMQPYHKGMPRLESRHFIAFYEKDPYHDKTLLKFGKLDFNLVQALHKKELKDLSRWWKDLDMHAKMPFPSRDRVPEGYFWTLGPFYEPQFALCRKFFLQVFKVTSIVDDIYDAYGTIDELTAFTKAAERWDRSCLDELPEYMKVSYASLIDTFEEFERDLAPQGRSWSVKYAREEMIQMCRVYYQEAKWCHEKYSPTCDEYLEKASIVSFGYNLGTVVCFLGMGDVATKEAFEWARGNPKVVRAAGIIGRLMDDIGSHHFEQGRDHVPSAVECYIRQHGVDEVTAQRELGKRVESSWKDINEMMLKPYMMPKPLLTRILNECRIVDVIYKGEDSYTFSNTTMKKNISHILTDPIPI.

Asp311, Asp315, Asp456, Ser460, and Glu464 together coordinate Mg(2+). The DDXXD motif signature appears at 311–315; that stretch reads DDIYD.

The protein belongs to the terpene synthase family. Requires Mg(2+) as cofactor.

The enzyme catalyses (2E,6E)-farnesyl diphosphate + H2O = (5S,9S,10S)-drim-7-en-11-ol + diphosphate. Its pathway is secondary metabolite biosynthesis; terpenoid biosynthesis. Catalyzes the conversion of (2E,6E)-farnesyl diphosphate (FPP) into drimenol, a precursor of the sesquiterpenoid polygodial. Polygodial has been shown to be an antifeedant for a number of herbivorous insects. The protein is (-)-drimenol synthase of Persicaria hydropiper (Marshpepper knotweed).